The primary structure comprises 462 residues: MGQQQSKGELLYQQVSYGNSEGIRALHRDGGDLEWMDREGKTPLILACMNSELFDVAKTLIELGSNVNAYRPGRHAGTPLHHAAKRGLENTVKLLLSHGANPLVLNDDCQTPLEVARVKGFSNVVRAIEKHICLFSGWMREFYGPTFLDLFAPQLLSRRVWVVIVPTGSRNPTKPFKLELVVYASLQDAQPRTVMPLWKANLEEPKAKQSDTSVMIVDNSTIPSRRMKKRRVCASHGRRRPQVVRQTRLKFAPSTEGDSQQLKWFCDACKGIPQPMHPPVFLQAPPSAPPPPSEDGLAMGMNASLHTTMSDPSNLNHHSIGQASSSSGPSSSTAPPSGKASAFGFNSHGIGIVLESSPSAPPLTDDDIATVDDGPIHYPSIDSTPVDLPSAASLPASTEGERKEDGNTGTCAICLDAPSEAVCVPCGHVAGCMSCLKEIKSKNWGCPVCRAKIDQVIKLYRV.

3 ANK repeats span residues 6 to 35 (SKGE…DLEW), 39 to 69 (EGKT…NVNA), and 75 to 104 (HAGT…NPLV). 2 disordered regions span residues 277-341 (HPPV…GKAS) and 356-402 (SSPS…EGER). Residues 304–317 (SLHTTMSDPSNLNH) show a composition bias toward polar residues. A compositionally biased stretch (low complexity) spans 319–341 (SIGQASSSSGPSSSTAPPSGKAS). The RING-type zinc finger occupies 411 to 450 (CAICLDAPSEAVCVPCGHVAGCMSCLKEIKSKNWGCPVCR).

It catalyses the reaction S-ubiquitinyl-[E2 ubiquitin-conjugating enzyme]-L-cysteine + [acceptor protein]-L-lysine = [E2 ubiquitin-conjugating enzyme]-L-cysteine + N(6)-ubiquitinyl-[acceptor protein]-L-lysine.. The protein operates within protein modification; protein ubiquitination. In terms of biological role, no E3 ubiquitin-protein ligase activity observed when associated with the E2 enzyme UBC8 in vitro. In Arabidopsis thaliana (Mouse-ear cress), this protein is Putative E3 ubiquitin-protein ligase XBAT35 (XBAT35).